The chain runs to 273 residues: DnaJ homolog subfamily C member 27 (273 aa).

Residues 23–30 (GNAEVGKS), 71–75 (DMAGH), and 134–137 (NKVD) each bind GTP. The 57-residue stretch at 217–273 (DSWDMLGVKPGATREEVNKAYRKLAVLLHPDKCVAPGSEDAFKAVVNARTSLLKNIK) folds into the J domain.

It belongs to the small GTPase superfamily. Rab family.

It localises to the nucleus. Functionally, GTPase possibly involved in regulation of the MEK/ERK pathway. The chain is DnaJ homolog subfamily C member 27 (dnajc27) from Danio rerio (Zebrafish).